The primary structure comprises 407 residues: Imidazolonepropionase (407 aa).

Fe(3+)-binding residues include His74 and His76. Positions 74 and 76 each coordinate Zn(2+). 3 residues coordinate 4-imidazolone-5-propanoate: Arg83, Tyr146, and His179. Tyr146 is an N-formimidoyl-L-glutamate binding site. His244 is a binding site for Fe(3+). Residue His244 coordinates Zn(2+). Position 247 (Gln247) interacts with 4-imidazolone-5-propanoate. Fe(3+) is bound at residue Asp319. Residue Asp319 participates in Zn(2+) binding. Positions 321 and 323 each coordinate N-formimidoyl-L-glutamate. Thr324 provides a ligand contact to 4-imidazolone-5-propanoate.

The protein belongs to the metallo-dependent hydrolases superfamily. HutI family. Zn(2+) is required as a cofactor. Requires Fe(3+) as cofactor.

Its subcellular location is the cytoplasm. It carries out the reaction 4-imidazolone-5-propanoate + H2O = N-formimidoyl-L-glutamate. It functions in the pathway amino-acid degradation; L-histidine degradation into L-glutamate; N-formimidoyl-L-glutamate from L-histidine: step 3/3. Functionally, catalyzes the hydrolytic cleavage of the carbon-nitrogen bond in imidazolone-5-propanoate to yield N-formimidoyl-L-glutamate. It is the third step in the universal histidine degradation pathway. This is Imidazolonepropionase from Salmonella typhimurium (strain LT2 / SGSC1412 / ATCC 700720).